The following is an 84-amino-acid chain: Small ribosomal subunit protein bS20 (84 aa).

The protein belongs to the bacterial ribosomal protein bS20 family.

In terms of biological role, binds directly to 16S ribosomal RNA. The chain is Small ribosomal subunit protein bS20 from Lacticaseibacillus casei (strain BL23) (Lactobacillus casei).